The sequence spans 1531 residues: Nuclear factor of activated T-cells 5 (1531 aa).

2 disordered regions span residues 34–89 and 114–141; these read ELQL…TSSS and VSNRGVSEKQLTSNTVQQHPSTPKRHTV. A compositionally biased stretch (polar residues) spans 41-51; the sequence is RETSVASMSQT. Low complexity predominate over residues 63-89; the sequence is VVAADASSAPSSSSMGGACSSFTTSSS. Serine 120 is subject to Phosphoserine. Lysine 122 carries the post-translational modification N6-acetyllysine. Residues 122–134 are compositionally biased toward polar residues; sequence KQLTSNTVQQHPS. A Phosphoserine modification is found at serine 134. Threonine 135 carries the phosphothreonine; by CDK5 modification. Serine 155 is subject to Phosphoserine. Disordered regions lie at residues 175–220 and 241–265; these read WMED…CEES and TTDNKGNSKAGNGTLENQKGTGVKK. Positions 179–192 are enriched in low complexity; the sequence is SPSNFSNMSTSSYN. Over residues 200-212 the composition is skewed to basic residues; sequence KSRKRNPKQRPGV. Positions 241–260 are enriched in polar residues; the sequence is TTDNKGNSKAGNGTLENQKG. Positions 264–443 constitute an RHD domain; that stretch reads KKSPMLCGQY…SPILCTQPAG (180 aa). The DNA-binding element occupies 293-300; it reads RARYLTEG. Lysine 556 participates in a covalent cross-link: Glycyl lysine isopeptide (Lys-Gly) (interchain with G-Cter in SUMO1); alternate. A Glycyl lysine isopeptide (Lys-Gly) (interchain with G-Cter in SUMO2); alternate cross-link involves residue lysine 556. Serine 561 is modified (phosphoserine). Glycyl lysine isopeptide (Lys-Gly) (interchain with G-Cter in SUMO2) cross-links involve residues lysine 573 and lysine 603. Disordered stretches follow at residues 640-666, 841-891, 958-996, 1211-1304, 1316-1371, and 1473-1502; these read NIAGNGSFSSPSSSHLPSENEKQQQIQ, VSPG…QVME, PPAVSGNETSTTTTQQVATPGTTMFQTSSSGDGEETGTQ, PQVA…QEQQ, APMN…QEQQ, and ISQPGQPQNEGQPPVTTLLSQQMPENSPLA. A compositionally biased stretch (low complexity) spans 646–656; that stretch reads SFSSPSSSHLP. Polar residues-rich tracts occupy residues 841 to 852 and 869 to 878; these read VSPGMFSSTEPT and HPQSENTLSN. Low complexity-rich tracts occupy residues 879-888 and 960-980; these read QQQQQQQQQQ and AVSGNETSTTTTQQVATPGTT. Polar residues-rich tracts occupy residues 981–996 and 1224–1247; these read MFQTSSSGDGEETGTQ and PQSQQGTMFQSQHSIVAMQSNSPS. Residues 1248–1266 are compositionally biased toward low complexity; it reads QEQQQQQQQQQQQQQQQQQ. 2 stretches are compositionally biased toward polar residues: residues 1267–1278 and 1291–1304; these read SILFSNQNTMAT and FNPNQNPMANQEQQ. The segment covering 1320–1330 has biased composition (low complexity); it reads QEQQPMQFQSQ. A compositionally biased stretch (polar residues) spans 1331–1371; it reads STVSSLQNPGPTQSESSQTPLFHSSPQIQLVQGSPSSQEQQ. Over residues 1475 to 1486 the composition is skewed to low complexity; the sequence is QPGQPQNEGQPP. Residues 1487-1502 are compositionally biased toward polar residues; sequence VTTLLSQQMPENSPLA.

As to quaternary structure, homodimer when bound to DNA, completely encircles its DNA target. Interacts with CIDEC; this interaction is direct and retains NFAT5 in the cytoplasm. Does not bind with Fos and Jun transcription factors. Interacts with DDX5 and DDX17; this interaction leads to DDX5/DDX17 recruitment to LNC2 and S100A4 promoters and NFAT5-mediated DDX5/DDX17-enhanced transactivation. Phosphorylated. Phosphorylated at Thr-135 by CDK5 in response to osmotic stress; this phosphorylation mediates its rapid nuclear localization. Post-translationally, poly-ADP-ribosylated by PARP1 in response to DNA damage, promoting recruitment to sites of R-loop-associated DNA damage. Widely expressed, with highest levels in skeletal muscle, brain, heart and peripheral blood leukocytes.

It localises to the nucleus. Its subcellular location is the cytoplasm. The protein resides in the chromosome. In terms of biological role, transcription factor involved, among others, in the transcriptional regulation of osmoprotective and inflammatory genes. Binds the DNA consensus sequence 5'-[ACT][AG]TGGAAA[CAT]A[TA][ATC][CA][ATG][GT][GAC][CG][CT]-3'. Mediates the transcriptional response to hypertonicity. Positively regulates the transcription of LCN2 and S100A4 genes; optimal transactivation of these genes requires the presence of DDX5/DDX17. Also involved in the DNA damage response by preventing formation of R-loops; R-loops are composed of a DNA:RNA hybrid and the associated non-template single-stranded DNA. This chain is Nuclear factor of activated T-cells 5, found in Homo sapiens (Human).